Here is a 174-residue protein sequence, read N- to C-terminus: Myelin basic protein (174 aa).

Residues 1 to 86 (MASQKRSSFR…GRPGDDNPVV (86 aa)) form a disordered region. Residue A2 is modified to N-acetylalanine; in forms C1, C2 and C3. The residue at position 4 (Q4) is a Deamidated glutamine; in forms C1 and C2; partial. The residue at position 8 (S8) is a Phosphoserine; in forms C2 and C3. Position 19 is a phosphoserine; in form C2 (S19). Residues 22–35 (DHARHGSPRHRDSG) show a composition bias toward basic and acidic residues. A Citrulline; in forms C1, C2 and C3 modification is found at R25. S34 carries the phosphoserine; in forms C2 and C3 modification. R42 carries the post-translational modification Citrulline; in form C3. The span at 45-61 (GGDRHVPRRGFGKDIHA) shows a compositional bias: basic and acidic residues. S65 carries the phosphoserine; in forms C2 and C3 modification. A Deamidated glutamine; in forms C1, C2 and C3; partial modification is found at Q72. Position 74 is a phosphoserine; in form C2 (S74). N91 carries the deamidated asparagine; in forms C1, C2 and C3; partial modification. The residue at position 97 (T97) is a Phosphothreonine; in forms C2 and C3. Deamidated glutamine; in forms C1, C2 and C3; partial is present on Q102. Q102 is modified (deamidated glutamine; in form C1). The residue at position 106 (R106) is an Omega-N-methylarginine; in forms C1, C2 and C3; alternate. R106 bears the Symmetric dimethylarginine; in forms C1, C2 and C3; alternate mark. Phosphoserine; in forms C2 and C3 occurs at positions 114 and 142. The disordered stretch occupies residues 126–174 (SGKFYEHKSAHKGHKGSYHEGQGTLSKIFKLGGSGSRPGSRSGSPVARR). Q147 is modified (deamidated glutamine; in forms C1, C2 and C3; partial). Residues 162–174 (RPGSRSGSPVARR) show a composition bias toward low complexity. Position 165 is a phosphoserine; in forms C2 and C3 (S165). R166 carries the post-translational modification Citrulline; in forms C2 and C3. S169 bears the Phosphoserine; in forms C2 and C3 mark.

Belongs to the myelin basic protein family. As to quaternary structure, homodimer. Several charge isomers are produced as a result of optional post-translational modifications, such as phosphorylation of serine or threonine residues, deamidation of glutamine or asparagine residues, citrullination and methylation of arginine residues. Chicken MBP contains 4 charge components denoted as C1, C2, C3 and C8. C1 lacks any phosphorylation sites, whereas C2 and C3 contain respectively 10 and 8 phosphorylation sites and arginine residues modified to citrulline. All three charge components contain deamidated glutamines and asparagine, and a methylated arginine.

The protein resides in the myelin membrane. Is, with PLP, the most abundant protein component of the myelin membrane in the CNS. Has a role in both the formation and stabilization of this compact multilayer arrangement of bilayers. Each splice variant and charge isomer may have a specialized function in the assembly of an optimized, biochemically functional myelin membrane. The protein is Myelin basic protein (MBP) of Gallus gallus (Chicken).